The sequence spans 468 residues: 3-isopropylmalate dehydratase large subunit 2 (468 aa).

The [4Fe-4S] cluster site is built by Cys-349, Cys-409, and Cys-412.

This sequence belongs to the aconitase/IPM isomerase family. LeuC type 1 subfamily. As to quaternary structure, heterodimer of LeuC and LeuD. [4Fe-4S] cluster serves as cofactor.

It catalyses the reaction (2R,3S)-3-isopropylmalate = (2S)-2-isopropylmalate. The protein operates within amino-acid biosynthesis; L-leucine biosynthesis; L-leucine from 3-methyl-2-oxobutanoate: step 2/4. Its function is as follows. Catalyzes the isomerization between 2-isopropylmalate and 3-isopropylmalate, via the formation of 2-isopropylmaleate. This Bradyrhizobium diazoefficiens (strain JCM 10833 / BCRC 13528 / IAM 13628 / NBRC 14792 / USDA 110) protein is 3-isopropylmalate dehydratase large subunit 2.